The chain runs to 199 residues: Superoxide dismutase [Cu-Zn] (199 aa).

The N-terminal stretch at 1 to 22 (MKLTKVALFSLGLFGFSSMALA) is a signal peptide. The Cu cation site is built by His92, His94, and His117. A disulfide bridge connects residues Cys99 and Cys195. Positions 117, 126, 135, and 138 each coordinate Zn(2+). His173 serves as a coordination point for Cu cation.

This sequence belongs to the Cu-Zn superoxide dismutase family. As to quaternary structure, homodimer. Cu cation serves as cofactor. The cofactor is Zn(2+).

Its subcellular location is the periplasm. It catalyses the reaction 2 superoxide + 2 H(+) = H2O2 + O2. Its function is as follows. Destroys radicals which are normally produced within the cells and which are toxic to biological systems. May play a role in the interactive biology of organisms with their hosts and so contribute to their capacity to cause disease. The sequence is that of Superoxide dismutase [Cu-Zn] (sodC) from Haemophilus ducreyi (strain 35000HP / ATCC 700724).